A 330-amino-acid polypeptide reads, in one-letter code: ADP-L-glycero-D-manno-heptose-6-epimerase (330 aa).

NADP(+)-binding positions include 11–12 (FI), 32–33 (DN), Lys39, Lys54, 75–79 (EGACS), and Asn92. Tyr139 (proton acceptor) is an active-site residue. Lys143 contributes to the NADP(+) binding site. Asn168 provides a ligand contact to substrate. Positions 169 and 177 each coordinate NADP(+). The active-site Proton acceptor is the Lys177. Substrate-binding positions include Arg179, His186, 200-203 (FGEY), Arg213, and Tyr292.

This sequence belongs to the NAD(P)-dependent epimerase/dehydratase family. HldD subfamily. Homopentamer. Requires NADP(+) as cofactor.

It carries out the reaction ADP-D-glycero-beta-D-manno-heptose = ADP-L-glycero-beta-D-manno-heptose. It functions in the pathway nucleotide-sugar biosynthesis; ADP-L-glycero-beta-D-manno-heptose biosynthesis; ADP-L-glycero-beta-D-manno-heptose from D-glycero-beta-D-manno-heptose 7-phosphate: step 4/4. Functionally, catalyzes the interconversion between ADP-D-glycero-beta-D-manno-heptose and ADP-L-glycero-beta-D-manno-heptose via an epimerization at carbon 6 of the heptose. This is ADP-L-glycero-D-manno-heptose-6-epimerase from Burkholderia pseudomallei (strain 1026b).